A 500-amino-acid polypeptide reads, in one-letter code: Galactofuranose transporter ATP-binding protein YtfR (500 aa).

ABC transporter domains follow at residues 10-245 and 259-497; these read LRTE…LGRE and LSDK…IMNA. 42 to 49 is a binding site for ATP; that stretch reads GENGAGKS.

It belongs to the ABC transporter superfamily. The complex is composed of two ATP-binding proteins (YtfR), two transmembrane proteins (YtfT and YjfF) and a solute-binding protein (YtfQ).

The protein resides in the cell inner membrane. The catalysed reaction is D-galactofuranose(out) + ATP + H2O = D-galactofuranose(in) + ADP + phosphate + H(+). Part of the ABC transporter complex YtfQRT-YjfF involved in galactofuranose transport. Responsible for energy coupling to the transport system. The sequence is that of Galactofuranose transporter ATP-binding protein YtfR (ytfR) from Escherichia coli O157:H7.